The following is a 480-amino-acid chain: Krueppel-like factor 10 (480 aa).

The span at 1–12 (MLNFGASLQQAS) shows a compositional bias: polar residues. 3 disordered regions span residues 1–32 (MLNF…PWDK), 64–83 (VTPV…TPDL), and 97–146 (PSDF…APPL). Over residues 14 to 32 (GKMELISEKSKEGAHPWDK) the composition is skewed to basic and acidic residues. Ser-183 carries the post-translational modification Phosphoserine. The interval 202 to 222 (AAVSPNRPKPEPSTAANGAEK) is disordered. Ser-249 bears the Phosphoserine mark. C2H2-type zinc fingers lie at residues 369–393 (HICS…VRTH), 399–423 (FSCS…RRTH), and 429–451 (FACP…ARRH).

It belongs to the Sp1 C2H2-type zinc-finger protein family. In terms of processing, ubiquitinated; mediated by SIAH1 and leading to its subsequent proteasomal degradation.

The protein resides in the nucleus. In terms of biological role, transcriptional repressor which binds to the consensus sequence 5'-GGTGTG-3'. Regulates the circadian expression of genes involved in lipogenesis, gluconeogenesis, and glycolysis in the liver. Represses the expression of PCK2, a rate-limiting step enzyme of gluconeogenesis. May play a role in the cell cycle regulation. Plays a role in the regulation of the circadian clock; binds to the GC box sequence in the promoter of the core clock component ARTNL/BMAL1 and represses its transcriptional activity. In Rattus norvegicus (Rat), this protein is Krueppel-like factor 10 (Klf10).